A 409-amino-acid chain; its full sequence is MKLKQRVVVLCAVLFLLGLAKVFLLDGGEGSAASRRDLRAFRKMEASLSLAKGARLTHTLQSPWEVAAQWVGPREVYPDETPELAAVLNALATAHVERADVGYKGTQLKALLVLDGGQKVVFKPKRYVRDYVVEGEPYAGYDRHNAEIAAFHLDRILGFRRAPLVVGRFMNLRTEIKPVATDQLLSTFLMHGNNTCFYGKCYYCRETEPACAEGDVMEGSVTLWLPDVWPLQKHRHPWGRTYREGKLARWEYDESYCEAVKKMPPYDAGPRLLDVIDTSIFDYLIGNADRHHYESFQDDGGASMLILLDNAKSFGNPSLDERSILAPLYQCCMVRVSTWNRLNLLKGGVLSSAMRQATAHDPAFPVLTGAHLTALDRRLNGVLATVRQCMETQGSENTLIEDRMNLPHP.

Over 1-6 (MKLKQR) the chain is Cytoplasmic. The helical; Signal-anchor for type II membrane protein transmembrane segment at 7–25 (VVVLCAVLFLLGLAKVFLL) threads the bilayer. Topologically, residues 26–409 (DGGEGSAASR…IEDRMNLPHP (384 aa)) are lumenal. ATP contacts are provided by glutamine 107 and lysine 123. Aspartate 142 is a binding site for Mn(2+). The N-linked (GlcNAc...) asparagine glycan is linked to asparagine 193. 2 disulfide bridges follow: cysteine 196/cysteine 211 and cysteine 201/cysteine 204. 222 to 225 (TLWL) contacts ATP. Cystine bridges form between cysteine 257–cysteine 331 and cysteine 332–cysteine 389. Aspartate 289 is an active-site residue. Residues glutamate 294 and aspartate 309 each coordinate ATP. Aspartate 309 is a binding site for Mn(2+).

It belongs to the FAM20 family. It depends on Mn(2+) as a cofactor.

The protein localises to the golgi apparatus membrane. It carries out the reaction 3-O-(beta-D-galactosyl-(1-&gt;3)-beta-D-galactosyl-(1-&gt;4)-beta-D-xylosyl)-L-seryl-[protein] + ATP = 3-O-(beta-D-galactosyl-(1-&gt;3)-beta-D-galactosyl-(1-&gt;4)-beta-D-2-O-phosphoxylosyl)-L-seryl-[protein] + ADP + H(+). Responsible for the 2-O-phosphorylation of xylose in the glycosaminoglycan-protein linkage region of proteoglycans thereby regulating the amount of mature GAG chains. Sulfated glycosaminoglycans (GAGs), including heparan sulfate and chondroitin sulfate, are synthesized on the so-called common GAG-protein linkage region (GlcUAbeta1-3Galbeta1-3Galbeta1-4Xylbeta1-O-Ser) of core proteins, which is formed by the stepwise addition of monosaccharide residues by the respective specific glycosyltransferases. This is Glycosaminoglycan xylosylkinase from Danio rerio (Zebrafish).